The following is a 337-amino-acid chain: Diacylglycerol acyltransferase/mycolyltransferase Ag85A (337 aa).

Residues 1–42 (MKLVDRFRGAATGTSRRLMVGAVGAALLSGLVGFVGGSATAS) form the signal peptide. A substrate-binding site is contributed by 85–86 (MR). The fibronectin-binding stretch occupies residues 101–111 (FEWYYQSGISV). Cysteine 130 and cysteine 135 are oxidised to a cystine. 2 residues coordinate substrate: serine 169 and aspartate 197. Serine 169 serves as the catalytic Nucleophile. Glutamate 273 is a catalytic residue. Residues 275–278 (FVRT), lysine 282, and 305–307 (HSW) each bind substrate. Residue histidine 305 is part of the active site.

Belongs to the mycobacterial A85 antigen family. Homodimer.

It is found in the secreted. The protein localises to the cell wall. Its subcellular location is the cytoplasm. It carries out the reaction an acyl-CoA + a 1,2-diacyl-sn-glycerol = a triacyl-sn-glycerol + CoA. It catalyses the reaction 2 alpha,alpha'-trehalose 6-mycolate = alpha,alpha'-trehalose 6,6'-bismycolate + alpha,alpha-trehalose. The antigen 85 proteins (FbpA, FbpB, FbpC) are responsible for the high affinity of mycobacteria for fibronectin, a large adhesive glycoprotein, which facilitates the attachment of M.tuberculosis to murine alveolar macrophages (AMs). They also help to maintain the integrity of the cell wall by catalyzing the transfer of mycolic acids to cell wall arabinogalactan, and through the synthesis of alpha,alpha-trehalose dimycolate (TDM, cord factor). They catalyze the transfer of a mycoloyl residue from one molecule of alpha,alpha-trehalose monomycolate (TMM) to another TMM, leading to the formation of TDM. FbpA mediates triacylglycerol (TAG) formation with long-chain acyl-CoA as the acyl donor and 1,2-dipalmitoyl-sn-glycerol (1,2-dipalmitin) as the acyl acceptor. It has a preference for C26:0-CoA over C18:1-CoA. This chain is Diacylglycerol acyltransferase/mycolyltransferase Ag85A (fbpA), found in Mycobacterium ulcerans.